Consider the following 242-residue polypeptide: UPF0246 protein SPP_1571 (242 aa).

This sequence belongs to the UPF0246 family.

This Streptococcus pneumoniae (strain P1031) protein is UPF0246 protein SPP_1571.